The sequence spans 62 residues: uncharacterized protein (62 aa).

Residues 37–57 traverse the membrane as a helical segment; that stretch reads FILGVILLGVIIESITLLVVY.

The protein localises to the membrane. This is an uncharacterized protein from Dictyostelium discoideum (Social amoeba).